A 108-amino-acid chain; its full sequence is Iron-sulfur cluster assembly protein CyaY (108 aa).

The protein belongs to the frataxin family.

Its function is as follows. Involved in iron-sulfur (Fe-S) cluster assembly. May act as a regulator of Fe-S biogenesis. The sequence is that of Iron-sulfur cluster assembly protein CyaY from Burkholderia ambifaria (strain MC40-6).